The chain runs to 78 residues: Translational regulator CsrA (78 aa).

It belongs to the CsrA/RsmA family. Homodimer; the beta-strands of each monomer intercalate to form a hydrophobic core, while the alpha-helices form wings that extend away from the core.

It localises to the cytoplasm. A translational regulator that binds mRNA to regulate translation initiation and/or mRNA stability. Usually binds in the 5'-UTR at or near the Shine-Dalgarno sequence preventing ribosome-binding, thus repressing translation. Its main target seems to be the major flagellin gene, while its function is anatagonized by FliW. In Borrelia turicatae (strain 91E135), this protein is Translational regulator CsrA.